The sequence spans 358 residues: Insulin gene enhancer protein isl-2b (358 aa).

2 LIM zinc-binding domains span residues 27–80 and 89–143; these read CVGC…CKRD and CAKC…RADH. The homeobox DNA-binding region spans 191 to 250; the sequence is TTRVRTVLNEKQLHTLRTCYNANPRPDALMKEQLVEMTGLSPRVIRVWFQNKRCKDKKRS. Residues 325–335 show a composition bias toward low complexity; that stretch reads ESGSLGNSSGS. The segment at 325–358 is disordered; it reads ESGSLGNSSGSDVTSLSSQLPDTPNSMVPSPVET. Residues 336 to 358 are compositionally biased toward polar residues; the sequence is DVTSLSSQLPDTPNSMVPSPVET.

The protein localises to the nucleus. Functionally, binds to one of the cis-acting domain of the insulin gene enhancer. May be involved in the regional specification of the myotome and also in target recognition by the caudal primary neuron. This is Insulin gene enhancer protein isl-2b (isl2b) from Danio rerio (Zebrafish).